The chain runs to 507 residues: ATP synthase subunit alpha, mitochondrial (507 aa).

Residue 171–178 (GDRQTGKT) participates in ATP binding.

Belongs to the ATPase alpha/beta chains family. F-type ATPases have 2 components, CF(1) - the catalytic core - and CF(0) - the membrane proton channel. CF(1) has five subunits: alpha(3), beta(3), gamma(1), delta(1), epsilon(1). CF(0) has three main subunits: a, b and c.

It is found in the mitochondrion. The protein localises to the mitochondrion inner membrane. Functionally, mitochondrial membrane ATP synthase (F(1)F(0) ATP synthase or Complex V) produces ATP from ADP in the presence of a proton gradient across the membrane which is generated by electron transport complexes of the respiratory chain. F-type ATPases consist of two structural domains, F(1) - containing the extramembraneous catalytic core, and F(0) - containing the membrane proton channel, linked together by a central stalk and a peripheral stalk. During catalysis, ATP synthesis in the catalytic domain of F(1) is coupled via a rotary mechanism of the central stalk subunits to proton translocation. Subunits alpha and beta form the catalytic core in F(1). Rotation of the central stalk against the surrounding alpha(3)beta(3) subunits leads to hydrolysis of ATP in three separate catalytic sites on the beta subunits. Subunit alpha does not bear the catalytic high-affinity ATP-binding sites. In Raphanus sativus (Radish), this protein is ATP synthase subunit alpha, mitochondrial (ATPA).